Reading from the N-terminus, the 574-residue chain is Sorting nexin-33 (574 aa).

In terms of domain architecture, SH3 spans 1–61 (MALKGRALYD…PASYVEIVRS (61 aa)). Residues 68 to 119 (ADYSSSPAGSPGAQVSLYNSPSVASPARSGGGSGFLSNQGSFEEDDDDDWDD) form a disordered region. Phosphoserine occurs at positions 77 and 92. Over residues 109 to 119 (FEEDDDDDWDD) the composition is skewed to acidic residues. The 111-residue stretch at 230-340 (FACSVEDPTK…HFLSCLDDKQ (111 aa)) folds into the PX domain. Positions 371-574 (LQDVEDRVDT…EKTLRMYDNL (204 aa)) constitute a BAR domain.

The protein belongs to the sorting nexin family. In terms of assembly, homodimer (via BAR domain). Interacts with ADAM15. Interacts with FASLG. Interacts (via SH3 domain) with DNM1 and DNM2. Interacts with WASL. Interacts with FCHSD1 (via the F-BAR domain). In terms of processing, phosphorylated. In terms of tissue distribution, detected in heart and pancreas.

The protein localises to the cytoplasm. It is found in the cytosol. It localises to the membrane. The protein resides in the cytoplasmic vesicle membrane. Plays a role in the reorganization of the cytoskeleton, endocytosis and cellular vesicle trafficking via its interactions with membranes, WASL, DNM1 and DNM2. Acts both during interphase and at the end of mitotic cell divisions. Required for efficient progress through mitosis and cytokinesis. Required for normal formation of the cleavage furrow at the end of mitosis. Modulates endocytosis of cell-surface proteins, such as APP and PRNP; this then modulates the secretion of APP and PRNP peptides. Promotes membrane tubulation (in vitro). May promote the formation of macropinosomes. In Homo sapiens (Human), this protein is Sorting nexin-33 (SNX33).